A 263-amino-acid polypeptide reads, in one-letter code: Norsolorinic acid ketoreductase stcE (263 aa).

Residues Leu29, Asp76, Asn105, Tyr177, Lys181, Ile208, and Ser210 each coordinate NADP(+). The active-site Proton donor is the Tyr177. The active-site Lowers pKa of active site Tyr is the Lys181.

The protein belongs to the short-chain dehydrogenases/reductases (SDR) family.

It catalyses the reaction (1'S)-averantin + NADP(+) = norsolorinic acid + NADPH + H(+). It participates in mycotoxin biosynthesis; sterigmatocystin biosynthesis. Short chain dehydrogenase; part of the gene cluster that mediates the biosynthesis of sterigmatocystin (ST), a polyketide-derived furanocoumarin which is part of the most toxic and carcinogenic compounds among the known mycotoxins. The first step in the biosynthesis of sterigmatocystin is the production of hexanoate by the fatty acid synthase (FAS) units stcJ and stcK. The polyketide backbone is assembled by the non-reducing polyketide synthase stcA by condensation of the starter hexanoyl-CoA and 7 malonyl-CoA extender units followed by cyclization and release of norsolorinic acid. Norsolorinic acid is the first stable intermediate in the biosynthesis of sterigmatocystin and is converted into averantin (AVN) by the ketoreductase stcE which reduces the hexanoate ketone to an alcohol. Averantin is then oxidized into 5'-hydroxyaverantin (HAVN) by the cytochrome P450 monooxygenase stcF. 5'-hydroxyaverantin is further converted to 5'-oxyaverantin (OAVN) by the 5'-hydroxyaverantin dehydrogenase stcG. The next step is the conversion of OAVN into averufin (AVF) which is catalyzed by a yet to be identified enzyme. The cytochrome P450 monooxygenase stcB and the flavin-binding monooxygenase stcW are both required for the conversion of averufin to 1-hydroxyversicolorone. The esterase stcI probably catalyzes the formation of versiconal hemiacetal acetate from 1-hydroxyversicolorone. The oxydoreductase stcN then probably catalyzes the biosynthetic step from versiconal to versicolorin B (VERB). The next step is performed by the versicolorin B desaturase stcL to produce versicolorin A (VERA). The ketoreductase stcU and the cytochrome P450 monooxygenase stcS are involved in the conversion of versicolorin A to demethylsterigmatocystin. The Baeyer-Villiger oxidas stcQ and the reductase stcR might be involved in the biosynthetic step from versicolorin A to demethylsterigmatocystin. The final step in the biosynthesis of sterigmatocystin is the methylation of demethylsterigmatocystin catalyzed by the methyltransferase stcP. In Emericella nidulans (strain FGSC A4 / ATCC 38163 / CBS 112.46 / NRRL 194 / M139) (Aspergillus nidulans), this protein is Norsolorinic acid ketoreductase stcE.